The sequence spans 76 residues: Putative snRNP Sm-like protein (76 aa).

The region spanning 4–76 is the Sm domain; that stretch reads RPLDVIHKSL…VLAISPTEEG (73 aa).

The protein belongs to the snRNP Sm proteins family.

This Pyrococcus furiosus (strain ATCC 43587 / DSM 3638 / JCM 8422 / Vc1) protein is Putative snRNP Sm-like protein.